The primary structure comprises 692 residues: Glycine--tRNA ligase beta subunit (692 aa).

The protein belongs to the class-II aminoacyl-tRNA synthetase family. In terms of assembly, tetramer of two alpha and two beta subunits.

Its subcellular location is the cytoplasm. The enzyme catalyses tRNA(Gly) + glycine + ATP = glycyl-tRNA(Gly) + AMP + diphosphate. This is Glycine--tRNA ligase beta subunit from Pseudoalteromonas atlantica (strain T6c / ATCC BAA-1087).